Here is a 76-residue protein sequence, read N- to C-terminus: UPF0248 protein MmarC5_1387 (76 aa).

The protein belongs to the UPF0248 family.

The polypeptide is UPF0248 protein MmarC5_1387 (Methanococcus maripaludis (strain C5 / ATCC BAA-1333)).